A 1074-amino-acid polypeptide reads, in one-letter code: Fibrous sheath CABYR-binding protein (1074 aa).

The tract at residues 1 to 73 is disordered; the sequence is MEECEEPEEP…SKDNYSRKEY (73 aa). Phosphoserine occurs at positions 25, 57, 186, and 275. 2 disordered regions span residues 272–294 and 317–343; these read QAPS…KDVV and LVQG…SELP. The segment covering 274–290 has biased composition (low complexity); the sequence is PSPAEETSAAETATTTA. Ser365 carries the post-translational modification Phosphoserine. Disordered regions lie at residues 437 to 789 and 818 to 982; these read VSAD…PLES and GVPA…PLKT. Low complexity predominate over residues 448 to 467; sequence PPSAEDASEEVASSEVLPPS. Residues 528 to 544 are compositionally biased toward pro residues; that stretch reads VLPPPAEEAPAEVPPPL. A compositionally biased stretch (low complexity) spans 558–575; the sequence is EEGPAEVPLAPAEEVPAE. Composition is skewed to pro residues over residues 576–592 and 673–688; these read FLPP…PPPL and PLPP…PPPA. Residues 689–720 are compositionally biased toward low complexity; it reads TEEAPVEVLPPATEEAPVEVLPPATEEAPVEV. Ser1020 carries the post-translational modification Phosphoserine. The segment at 1026 to 1054 is disordered; the sequence is SEKELESTTLTSDKMSEGIDSVPEDVSGT.

As to quaternary structure, interacts with CABYR. Interacts with ROPN1 and ROPN1L; the interaction increases upon spermatozoa capacitation conditions. Post-translationally, phosphorylated by PKA upon spermatozoa capacitation conditions. Expression is restricted to testis and epididymis, expressed by spermatozoa.

The protein resides in the cell projection. The protein localises to the cilium. It localises to the flagellum. May be involved in the later stages of fibrous sheath biogenesis and spermatozoa capacitation. Inhibits ROPN1 and ROPN1L SUMOylation. Binds calcium. This is Fibrous sheath CABYR-binding protein from Mus musculus (Mouse).